The sequence spans 432 residues: Enolase (432 aa).

Position 167 (glutamine 167) interacts with (2R)-2-phosphoglycerate. Catalysis depends on glutamate 209, which acts as the Proton donor. Mg(2+)-binding residues include aspartate 246, glutamate 290, and aspartate 317. The (2R)-2-phosphoglycerate site is built by lysine 342, arginine 371, serine 372, and lysine 393. The active-site Proton acceptor is lysine 342.

Belongs to the enolase family. In terms of assembly, component of the RNA degradosome, a multiprotein complex involved in RNA processing and mRNA degradation. The cofactor is Mg(2+).

Its subcellular location is the cytoplasm. It localises to the secreted. It is found in the cell surface. It carries out the reaction (2R)-2-phosphoglycerate = phosphoenolpyruvate + H2O. The protein operates within carbohydrate degradation; glycolysis; pyruvate from D-glyceraldehyde 3-phosphate: step 4/5. Functionally, catalyzes the reversible conversion of 2-phosphoglycerate (2-PG) into phosphoenolpyruvate (PEP). It is essential for the degradation of carbohydrates via glycolysis. The sequence is that of Enolase from Salmonella dublin (strain CT_02021853).